The sequence spans 210 residues: Large ribosomal subunit protein uL4 (210 aa).

The disordered stretch occupies residues 56-80 (FVSGGGKKPWRQKGTGRARAGSTRS).

Belongs to the universal ribosomal protein uL4 family. In terms of assembly, part of the 50S ribosomal subunit.

In terms of biological role, one of the primary rRNA binding proteins, this protein initially binds near the 5'-end of the 23S rRNA. It is important during the early stages of 50S assembly. It makes multiple contacts with different domains of the 23S rRNA in the assembled 50S subunit and ribosome. Its function is as follows. Forms part of the polypeptide exit tunnel. The sequence is that of Large ribosomal subunit protein uL4 from Solidesulfovibrio magneticus (strain ATCC 700980 / DSM 13731 / RS-1) (Desulfovibrio magneticus).